The chain runs to 389 residues: MTTLSTATILLPEPLGGTLVNRVRRPGTDFDPAELQGLPRLELSDRSFADLEMLATGAYSPLTGFLGEADYLSVIERMRLADGTPWSIPITLPVSRAEAERYAGCVVLTRGGEAVGTLEVQERFEARQSLEAREVYRTEDTAHPGVAALYAQGDVNLAGPVTLFEVPRGNFPRHHRTPSEVRAVIEARGWRTTVAFQTRNPIHRAHEYLHKVTLELVDGLLLHPLVGQTKGDDVPAATRVKAYEVLLEHYYPKERTLLSVYPAAMRYAGPREAILHALSRRNYGVTHFIVGRDHAGVGQYYGTYDAQEIFSAYTPEELGIRILKFEHTFYCRTCGQLVSPRTCPHGSEHHLVLSGTKVREKLRAGERLPAEFTRPEVAEVLREAYAAQD.

This sequence belongs to the sulfate adenylyltransferase family.

The catalysed reaction is sulfate + ATP + H(+) = adenosine 5'-phosphosulfate + diphosphate. It functions in the pathway sulfur metabolism; hydrogen sulfide biosynthesis; sulfite from sulfate: step 1/3. This chain is Sulfate adenylyltransferase, found in Deinococcus geothermalis (strain DSM 11300 / CIP 105573 / AG-3a).